Reading from the N-terminus, the 256-residue chain is MADWSAEQYLKFEDERTRPARELLAQIPVVAPGKVADLGCGPGNSTELLVERWPDASVIGVDTSADMLRQARERLPQQKFIEANVAHWAPPPGTEVLFANAVFQWVPDHLKHLKRLITGLDEGGVLAVQMPDNVDEPSHVMMREVAFQEPWRHQLSQAAELRDLLPKPGAYYDALRPLCSRLDIWHTVYNHVLDDAAAIVEWVKGTGLRPFIDPLDLHERKAYLAAYTARVAAAYPPQSDGKVLLRFPRIFIVAIK.

The protein belongs to the methyltransferase superfamily. Tam family.

It is found in the cytoplasm. It carries out the reaction trans-aconitate + S-adenosyl-L-methionine = (E)-3-(methoxycarbonyl)pent-2-enedioate + S-adenosyl-L-homocysteine. Functionally, catalyzes the S-adenosylmethionine monomethyl esterification of trans-aconitate. The protein is Trans-aconitate 2-methyltransferase of Rhodopseudomonas palustris (strain HaA2).